The primary structure comprises 673 residues: UvrABC system protein B (673 aa).

A Helicase ATP-binding domain is found at 26 to 183 (EGLEDGLAHQ…RRLAELQYAR (158 aa)). 39 to 46 (GVTGSGKT) serves as a coordination point for ATP. Positions 92-115 (YYDYYQPEAYVPSSDTFIEKDASV) match the Beta-hairpin motif. Residues 431-597 (QVDDLLSEIR…GLNKKVVDIL (167 aa)) enclose the Helicase C-terminal domain. Residues 608–627 (AKGRGKSRPIVEPDNVPMDM) form a disordered region. Positions 633–668 (QQKIHELEGLMMQHAQNLEFEEAAQIRDQLHLLREL) constitute a UVR domain.

It belongs to the UvrB family. In terms of assembly, forms a heterotetramer with UvrA during the search for lesions. Interacts with UvrC in an incision complex.

It localises to the cytoplasm. Its function is as follows. The UvrABC repair system catalyzes the recognition and processing of DNA lesions. A damage recognition complex composed of 2 UvrA and 2 UvrB subunits scans DNA for abnormalities. Upon binding of the UvrA(2)B(2) complex to a putative damaged site, the DNA wraps around one UvrB monomer. DNA wrap is dependent on ATP binding by UvrB and probably causes local melting of the DNA helix, facilitating insertion of UvrB beta-hairpin between the DNA strands. Then UvrB probes one DNA strand for the presence of a lesion. If a lesion is found the UvrA subunits dissociate and the UvrB-DNA preincision complex is formed. This complex is subsequently bound by UvrC and the second UvrB is released. If no lesion is found, the DNA wraps around the other UvrB subunit that will check the other stand for damage. This is UvrABC system protein B from Escherichia coli O81 (strain ED1a).